Here is a 572-residue protein sequence, read N- to C-terminus: Methionine--tRNA ligase (572 aa).

The 'HIGH' region signature appears at 11–21 (PYINGIKHLGN). Zn(2+)-binding residues include Cys143, Cys146, Cys156, and Cys159. Residues 346 to 350 (QFSTS) carry the 'KMSKS' region motif. Thr349 is a binding site for ATP.

This sequence belongs to the class-I aminoacyl-tRNA synthetase family. MetG type 1 subfamily. Monomer. It depends on Zn(2+) as a cofactor.

It localises to the cytoplasm. It carries out the reaction tRNA(Met) + L-methionine + ATP = L-methionyl-tRNA(Met) + AMP + diphosphate. Is required not only for elongation of protein synthesis but also for the initiation of all mRNA translation through initiator tRNA(fMet) aminoacylation. This is Methionine--tRNA ligase from Cereibacter sphaeroides (strain ATCC 17029 / ATH 2.4.9) (Rhodobacter sphaeroides).